Consider the following 487-residue polypeptide: Complement C1r subcomponent-like protein (487 aa).

Positions 1–35 (MPGPRVWGKYLWRSPHSKGCPGAMWWLLLWGVLQA) are cleaved as a signal peptide. Residues 39–163 (RGSVLLAQEL…KGFLALYQTV (125 aa)) enclose the CUB domain. A disulfide bridge links cysteine 94 with cysteine 112. Residues asparagine 147 and asparagine 166 are each glycosylated (N-linked (GlcNAc...) asparagine). The Sushi domain maps to 165–230 (VNYSQPISEA…DGEEVLQCMP (66 aa)). A disulfide bond links cysteine 195 and cysteine 228. N-linked (GlcNAc...) (complex) asparagine glycosylation occurs at asparagine 242. The Peptidase S1 domain maps to 245–484 (TLGSSRAKLG…YVDWIKGVMN (240 aa)). The Charge relay system role is filled by histidine 283. Residue asparagine 296 is glycosylated (N-linked (GlcNAc...) asparagine). The Charge relay system role is filled by aspartate 339. Asparagine 363 is a glycosylation site (N-linked (GlcNAc...) asparagine). Cystine bridges form between cysteine 402–cysteine 421 and cysteine 432–cysteine 462. The active-site Charge relay system is serine 436.

It belongs to the peptidase S1 family. As to expression, highly expressed in placenta, liver, kidney, pancreas, moderately in lung, spleen, prostate, ovary, colon, and PBL, and weakly in heart, skeletal muscle, thymus, testis, and small intestine. Expressed in PC-3 (prostate adenocarcinoma) and SK-OV-3 (ovary adenocarcinoma) cells, but not in LoVo and HT-29 (colon adenocarcinoma), SMMC7721 (hepatocellular carcinoma), CaoV-3 (ovary adenocarcinoma), HeLa (cervix epithelioid carcinoma), MCF-7 (breast adenocarcinoma), U-251MG (glioma) or A-549 (lung carcinoma) cells. Widely expressed in myeloid leukemia cell lines, including K-562 (chronic myelogenous leukemia), THP-1 (myelomonocytic leukemia), HL-60 and NB4 (promyelocytic leukemia), and KG-1 (acute myelogenous leukemia) cells. Expressed mainly in the liver and in serum (at protein level).

It localises to the secreted. Mediates the proteolytic cleavage of HP/haptoglobin in the endoplasmic reticulum. This chain is Complement C1r subcomponent-like protein (C1RL), found in Homo sapiens (Human).